The primary structure comprises 964 residues: Chaperone protein ClpB4, mitochondrial (964 aa).

The N-terminal 39 residues, 1–39 (MALRRLSKSVSSAIKAQYTLSRPSPLLRSRSLSSSPHYT), are a transit peptide targeting the mitochondrion. A Clp R domain is found at 83–227 (VNQNEFTEMA…KDAIKDVRGD (145 aa)). Repeat stretches follow at residues 88 to 153 (FTEM…ISKQ) and 164 to 227 (LGSS…VRGD). The interval 242–490 (LEKYGNDLTE…KLKMEITSKP (249 aa)) is i. ATP-binding positions include 287–294 (GEPGVGKT) and 690–697 (GPTGVGKT). Residues 616–807 (VTDLDIAEIV…VVIMTSNIGS (192 aa)) form an II region.

Belongs to the ClpA/ClpB family.

It localises to the mitochondrion. Functionally, molecular chaperone that does not seem to be involved in heat stress response or tolerance. The polypeptide is Chaperone protein ClpB4, mitochondrial (CLPB4) (Arabidopsis thaliana (Mouse-ear cress)).